The following is a 49-amino-acid chain: uncharacterized protein (49 aa).

This is an uncharacterized protein from Sinorhizobium fredii (strain NBRC 101917 / NGR234).